Reading from the N-terminus, the 101-residue chain is Unclassified hydrophobin dewD (101 aa).

An N-terminal signal peptide occupies residues 1–21; sequence MHLSTSAAAILALSLAGPTMA. 4 disulfide bridges follow: Cys-27–Cys-81, Cys-41–Cys-73, Cys-42–Cys-60, and Cys-82–Cys-91.

Self-assembles to form functional amyloid fibrils called rodlets. Self-assembly into fibrillar rodlets occurs spontaneously at hydrophobic:hydrophilic interfaces and the rodlets further associate laterally to form amphipathic monolayers.

The protein resides in the secreted. Its subcellular location is the spore wall. In terms of biological role, aerial growth, conidiation, and dispersal of filamentous fungi in the environment rely upon a capability of their secreting small amphipathic proteins called hydrophobins (HPBs) with low sequence identity. Class I can self-assemble into an outermost layer of rodlet bundles on aerial cell surfaces, conferring cellular hydrophobicity that supports fungal growth, development and dispersal; whereas Class II form highly ordered films at water-air interfaces through intermolecular interactions but contribute nothing to the rodlet structure. DewD is an unclassified hydrophobin that contributes to the hydrophobicity of the spore surface. This Emericella nidulans (strain FGSC A4 / ATCC 38163 / CBS 112.46 / NRRL 194 / M139) (Aspergillus nidulans) protein is Unclassified hydrophobin dewD.